A 257-amino-acid chain; its full sequence is uncharacterized protein (257 aa).

Residues 1 to 22 (MRYLKRLSWYISILILIVVIAG) form the signal peptide. Cys-23 carries the N-palmitoyl cysteine lipid modification. Cys-23 carries the S-diacylglycerol cysteine lipid modification.

Belongs to the staphylococcal tandem lipoprotein family.

It is found in the cell membrane. This is an uncharacterized protein from Staphylococcus aureus (strain N315).